A 61-amino-acid polypeptide reads, in one-letter code: Sperm protamine P1 (61 aa).

The interval 1–61 (MARYRHSRSR…RRYHSHRRRY (61 aa)) is disordered.

This sequence belongs to the protamine P1 family. Testis.

Its subcellular location is the nucleus. The protein resides in the chromosome. In terms of biological role, protamines substitute for histones in the chromatin of sperm during the haploid phase of spermatogenesis. They compact sperm DNA into a highly condensed, stable and inactive complex. In Notoryctes typhlops (Southern marsupial mole), this protein is Sperm protamine P1 (PRM1).